Consider the following 92-residue polypeptide: Protein S100-A12 (92 aa).

EF-hand domains follow at residues asparagine 13–threonine 48 and lysine 49–threonine 84. Histidine 16 contacts Cu cation. Histidine 16 is a Zn(2+) binding site. Residues serine 19 and histidine 24 each coordinate Ca(2+). A Cu cation-binding site is contributed by aspartate 26. Aspartate 26 contributes to the Zn(2+) binding site. Ca(2+) contacts are provided by threonine 27 and glutamate 32. Positions threonine 38–threonine 53 are hinge domain. Positions 62, 64, 66, 68, and 73 each coordinate Ca(2+). Positions 86 and 90 each coordinate Cu cation. The Zn(2+) site is built by histidine 86 and histidine 90.

The protein belongs to the S-100 family. In terms of assembly, homodimer. Homooligomer (tetramer or hexamer) in the presence of calcium, zinc and copper ions. Interacts with AGER and both calcium and zinc are essential for the interaction. Interacts with CACYBP in a calcium-dependent manner. In terms of tissue distribution, found essentially in granulocytes with small amounts found in lymphocytes.

It localises to the secreted. Its subcellular location is the cytoplasm. It is found in the cytoskeleton. The protein resides in the cell membrane. Its function is as follows. S100A12 is a calcium-, zinc- and copper-binding protein which plays a prominent role in the regulation of inflammatory processes and immune response. Its pro-inflammatory activity involves recruitment of leukocytes, promotion of cytokine and chemokine production, and regulation of leukocyte adhesion and migration. Acts as an alarmin or a danger associated molecular pattern (DAMP) molecule and stimulates innate immune cells via binding to receptor for advanced glycation endproducts (AGER). Binding to AGER activates the MAP-kinase and NF-kappa-B signaling pathways leading to production of pro-inflammatory cytokines and up-regulation of cell adhesion molecules ICAM1 and VCAM1. Acts as a monocyte and mast cell chemoattractant. Can stimulate mast cell degranulation and activation which generates chemokines, histamine and cytokines inducing further leukocyte recruitment to the sites of inflammation. Can inhibit the activity of matrix metalloproteinases; MMP2, MMP3 and MMP9 by chelating Zn(2+) from their active sites. The protein is Protein S100-A12 (S100A12) of Sus scrofa (Pig).